Reading from the N-terminus, the 286-residue chain is 4-hydroxy-tetrahydrodipicolinate synthase 2 (286 aa).

Thr45 contacts pyruvate. Tyr133 functions as the Proton donor/acceptor in the catalytic mechanism. The Schiff-base intermediate with substrate role is filled by Lys161. Ile203 contributes to the pyruvate binding site.

Belongs to the DapA family. In terms of assembly, homotetramer; dimer of dimers.

It localises to the cytoplasm. It catalyses the reaction L-aspartate 4-semialdehyde + pyruvate = (2S,4S)-4-hydroxy-2,3,4,5-tetrahydrodipicolinate + H2O + H(+). It functions in the pathway amino-acid biosynthesis; L-lysine biosynthesis via DAP pathway; (S)-tetrahydrodipicolinate from L-aspartate: step 3/4. Functionally, catalyzes the condensation of (S)-aspartate-beta-semialdehyde [(S)-ASA] and pyruvate to 4-hydroxy-tetrahydrodipicolinate (HTPA). The protein is 4-hydroxy-tetrahydrodipicolinate synthase 2 of Clostridium acetobutylicum (strain ATCC 824 / DSM 792 / JCM 1419 / IAM 19013 / LMG 5710 / NBRC 13948 / NRRL B-527 / VKM B-1787 / 2291 / W).